The primary structure comprises 300 residues: MDYLLNYADQYALDSIYNAVYPLARDNIVRQSISLFFLTWFGGMFLYLTFASLSYQFVFDKSLMDHPKFLKNQVFMEVLTALQNLPGMALLTVPWFLAELHGYSYLYDNISDYGLKYFLCSLPLFVMFSDFGIYWAHRFLHHRYVYPRLHKLHHKWIICTPYASHAFKSADGFLQSLPYHLFPFFFPLHKLTYLALFTFVNFWSIMIHDGKYISNNPIINGAAHHNGHHIYFNYNYGQFTTLFDRLGNSFRAPDEAWFDKDLRQNEDVLRVELMEYEAIRNEVEGDDDREYIANSAKKNH.

The next 3 helical transmembrane spans lie at 33 to 53 (ISLFFLTWFGGMFLYLTFASL), 78 to 98 (VLTALQNLPGMALLTVPWFLA), and 117 to 137 (YFLCSLPLFVMFSDFGIYWAH). In terms of domain architecture, Fatty acid hydroxylase spans 123 to 248 (PLFVMFSDFG…FTTLFDRLGN (126 aa)). The short motif at 137–141 (HRFLH) is the Histidine box-1 element. A Histidine box-2 motif is present at residues 150–154 (HKLHH). The helical transmembrane segment at 180–200 (HLFPFFFPLHKLTYLALFTFV) threads the bilayer. Residues 225–229 (HNGHH) carry the Histidine box-3 motif.

It belongs to the sterol desaturase family. It depends on Fe cation as a cofactor.

The protein localises to the endoplasmic reticulum membrane. The catalysed reaction is episterol + 2 Fe(II)-[cytochrome b5] + O2 + 2 H(+) = 5-dehydroepisterol + 2 Fe(III)-[cytochrome b5] + 2 H2O. Its pathway is steroid metabolism; ergosterol biosynthesis. Its function is as follows. C-5 sterol desaturase; part of the third module of ergosterol biosynthesis pathway that includes by the late steps of the pathway. Erg31 and erg32 catalyze the introduction of a C-5 double bond in the B ring to produce 5-dehydroepisterol. The third module or late pathway involves the ergosterol synthesis itself through consecutive reactions that mainly occur in the endoplasmic reticulum (ER) membrane. Firstly, the squalene synthase erg9 catalyzes the condensation of 2 farnesyl pyrophosphate moieties to form squalene, which is the precursor of all steroids. Secondly, squalene is converted into lanosterol by the consecutive action of the squalene epoxidase erg1 and the lanosterol synthase erg7. The lanosterol 14-alpha-demethylase erg11/cyp1 catalyzes C14-demethylation of lanosterol to produce 4,4'-dimethyl cholesta-8,14,24-triene-3-beta-ol. In the next steps, a complex process involving various demethylation, reduction and desaturation reactions catalyzed by the C-14 reductase erg24 and the C-4 demethylation complex erg25-erg26-erg27 leads to the production of zymosterol. Erg28 likely functions in the C-4 demethylation complex reaction by tethering erg26 and Erg27 to the endoplasmic reticulum or to facilitate interaction between these proteins. Then, the sterol 24-C-methyltransferase erg6 catalyzes the methyl transfer from S-adenosyl-methionine to the C-24 of zymosterol to form fecosterol. The C-8 sterol isomerase erg2 catalyzes the reaction which results in unsaturation at C-7 in the B ring of sterols and thus converts fecosterol to episterol. The sterol-C5-desaturases erg31 and erg32 then catalyze the introduction of a C-5 double bond in the B ring to produce 5-dehydroepisterol. The C-22 sterol desaturase erg5 further converts 5-dehydroepisterol into ergosta-5,7,22,24(28)-tetraen-3beta-ol by forming the C-22(23) double bond in the sterol side chain. Finally, ergosta-5,7,22,24(28)-tetraen-3beta-ol is substrate of the C-24(28) sterol reductase erg4 to produce ergosterol. In the genus Schizosaccharomyces, a second route exists between lanosterol and fecosterol, via the methylation of lanosterol to eburicol by erg6, followed by C14-demethylation by erg11/cyp1 and C4-demethylation by the demethylation complex erg25-erg26-erg27. The polypeptide is Delta(7)-sterol 5(6)-desaturase erg31 (Schizosaccharomyces pombe (strain 972 / ATCC 24843) (Fission yeast)).